The sequence spans 546 residues: Chaperonin GroEL (546 aa).

Residues Thr30–Pro33, Lys51, Asp87–Thr91, Gly415, and Asp495 contribute to the ATP site.

It belongs to the chaperonin (HSP60) family. As to quaternary structure, forms a cylinder of 14 subunits composed of two heptameric rings stacked back-to-back. Interacts with the co-chaperonin GroES.

It localises to the cytoplasm. It catalyses the reaction ATP + H2O + a folded polypeptide = ADP + phosphate + an unfolded polypeptide.. Functionally, together with its co-chaperonin GroES, plays an essential role in assisting protein folding. The GroEL-GroES system forms a nano-cage that allows encapsulation of the non-native substrate proteins and provides a physical environment optimized to promote and accelerate protein folding. In Brucella suis (strain ATCC 23445 / NCTC 10510), this protein is Chaperonin GroEL.